Here is a 240-residue protein sequence, read N- to C-terminus: Bidirectional sugar transporter SWEET5 (240 aa).

The Extracellular segment spans residues 1–9 (MTDPHTART). A helical transmembrane segment spans residues 10–30 (IVGIVGNVISFGLFCAPIPTM). Positions 10–95 (IVGIVGNVIS…YVTIFFVFAT (86 aa)) constitute a MtN3/slv 1 domain. Over 31–45 (VKIWKMKSVSEFKPD) the chain is Cytoplasmic. A helical transmembrane segment spans residues 46-66 (PYVATVLNCMMWTFYGLPFVQ). Residues 67–72 (PDSLLV) are Extracellular-facing. Residues 73 to 93 (ITINGTGLFMELVYVTIFFVF) form a helical membrane-spanning segment. Over 94–103 (ATSPVRRKIT) the chain is Cytoplasmic. Residues 104-124 (IAMVIEVIFMAVVIFCTMYFL) form a helical membrane-spanning segment. The Extracellular portion of the chain corresponds to 125–131 (HTTKQRS). The helical transmembrane segment at 132–152 (MLIGILCIVFNVIMYAAPLTV) threads the bilayer. The MtN3/slv 2 domain occupies 133-217 (LIGILCIVFN…IIYITYYKTT (85 aa)). Over 153 to 165 (MKLVIKTKSVKYM) the chain is Cytoplasmic. The chain crosses the membrane as a helical span at residues 166 to 186 (PFFLSLANFMNGVVWVIYACL). The Extracellular portion of the chain corresponds to 187–190 (KFDP). The helical transmembrane segment at 191-211 (YILIPNGLGSLSGIIQLIIYI) threads the bilayer. Topologically, residues 212-240 (TYYKTTNWNDDDEDKEKRYSNAGIELGQA) are cytoplasmic.

It belongs to the SWEET sugar transporter family. Forms homooligomers and heterooligomers with SWEET6, SWEET8, SWEET9, SWEET11 and SWEET12.

The protein resides in the cell membrane. Its function is as follows. Mediates both low-affinity uptake and efflux of sugar across the plasma membrane. May play roles in nurturing the male gametophyte. The chain is Bidirectional sugar transporter SWEET5 from Arabidopsis thaliana (Mouse-ear cress).